The sequence spans 291 residues: ATP synthase gamma chain (291 aa).

Belongs to the ATPase gamma chain family. In terms of assembly, F-type ATPases have 2 components, CF(1) - the catalytic core - and CF(0) - the membrane proton channel. CF(1) has five subunits: alpha(3), beta(3), gamma(1), delta(1), epsilon(1). CF(0) has three main subunits: a, b and c.

It is found in the cell inner membrane. Produces ATP from ADP in the presence of a proton gradient across the membrane. The gamma chain is believed to be important in regulating ATPase activity and the flow of protons through the CF(0) complex. This chain is ATP synthase gamma chain, found in Variovorax paradoxus (strain S110).